Here is a 167-residue protein sequence, read N- to C-terminus: Keratin-associated protein 1-3 (167 aa).

It belongs to the KRTAP type 1 family. Interacts with hair keratins. In terms of tissue distribution, expressed in the middle/upper portions of the hair cortex, in the region termed the keratogenous zone.

In terms of biological role, in the hair cortex, hair keratin intermediate filaments are embedded in an interfilamentous matrix, consisting of hair keratin-associated proteins (KRTAP), which are essential for the formation of a rigid and resistant hair shaft through their extensive disulfide bond cross-linking with abundant cysteine residues of hair keratins. The matrix proteins include the high-sulfur and high-glycine-tyrosine keratins. This is Keratin-associated protein 1-3 (KRTAP1-3) from Homo sapiens (Human).